We begin with the raw amino-acid sequence, 269 residues long: MKMTSRKLSDILKQRLQHENRSFLFDREKDTLRVEDQTTKKGITLDLPPIIAKWELKKDEAIDEIVYYVSEAMTAMEGKAQEMTGKETRIYPVIRSTSFPDKSSEDIPLIYDDHTAETRIYYALDLGKTYRLIDQRMLEKENWTKERIRETAAFNLRSLPTVVKEDTVAGNYFYFFRANDGYDASRILNEAILNEYKQHAEGELAISVPHQDVLILADIRNESGYDILGQMSMSFFAGGTVPITALSFLYNEGKLEPVFILAKSRPKKD.

This sequence belongs to the UPF0354 family.

The protein is UPF0354 protein YtpQ (ytpQ) of Bacillus subtilis (strain 168).